A 487-amino-acid chain; its full sequence is GTPase Der (487 aa).

EngA-type G domains follow at residues Phe3 to Ala167 and Leu203 to Asn378. GTP contacts are provided by residues Gly9–Ser16, Asp56–Leu60, Asn119–Glu122, Gly209–Ser216, Asp256–Met260, and Asn321–Asp324. The KH-like domain occupies Arg379–Gly463. A disordered region spans residues Met459 to Gly487. The segment covering Arg471–Gly487 has biased composition (basic residues).

It belongs to the TRAFAC class TrmE-Era-EngA-EngB-Septin-like GTPase superfamily. EngA (Der) GTPase family. In terms of assembly, associates with the 50S ribosomal subunit.

Functionally, GTPase that plays an essential role in the late steps of ribosome biogenesis. This Cereibacter sphaeroides (strain ATCC 17025 / ATH 2.4.3) (Rhodobacter sphaeroides) protein is GTPase Der.